The sequence spans 250 residues: 4-hydroxy-tetrahydrodipicolinate reductase (250 aa).

NAD(+)-binding positions include 9–14 (GATGKM), 79–81 (GTT), and 103–106 (SANM). The Proton donor/acceptor role is filled by histidine 135. Position 136 (histidine 136) interacts with (S)-2,3,4,5-tetrahydrodipicolinate. The Proton donor role is filled by lysine 139. 145 to 146 (GT) serves as a coordination point for (S)-2,3,4,5-tetrahydrodipicolinate.

It belongs to the DapB family.

The protein localises to the cytoplasm. The catalysed reaction is (S)-2,3,4,5-tetrahydrodipicolinate + NAD(+) + H2O = (2S,4S)-4-hydroxy-2,3,4,5-tetrahydrodipicolinate + NADH + H(+). It catalyses the reaction (S)-2,3,4,5-tetrahydrodipicolinate + NADP(+) + H2O = (2S,4S)-4-hydroxy-2,3,4,5-tetrahydrodipicolinate + NADPH + H(+). Its pathway is amino-acid biosynthesis; L-lysine biosynthesis via DAP pathway; (S)-tetrahydrodipicolinate from L-aspartate: step 4/4. Its function is as follows. Catalyzes the conversion of 4-hydroxy-tetrahydrodipicolinate (HTPA) to tetrahydrodipicolinate. This chain is 4-hydroxy-tetrahydrodipicolinate reductase, found in Rickettsia bellii (strain OSU 85-389).